The chain runs to 391 residues: Formate-dependent phosphoribosylglycinamide formyltransferase (391 aa).

N(1)-(5-phospho-beta-D-ribosyl)glycinamide-binding positions include 18-19 and Glu-78; that span reads EL. ATP-binding positions include Arg-110, Lys-151, 156-161, 191-194, and Glu-199; these read SSGKGQ and EEFI. Positions 115-305 constitute an ATP-grasp domain; it reads ELAHEELGIR…EFELHLRAIL (191 aa). Mg(2+) is bound by residues Glu-264 and Glu-276. Residues Asp-283, Lys-353, and 360–361 each bind N(1)-(5-phospho-beta-D-ribosyl)glycinamide; that span reads RR.

It belongs to the PurK/PurT family. In terms of assembly, homodimer.

It carries out the reaction N(1)-(5-phospho-beta-D-ribosyl)glycinamide + formate + ATP = N(2)-formyl-N(1)-(5-phospho-beta-D-ribosyl)glycinamide + ADP + phosphate + H(+). The protein operates within purine metabolism; IMP biosynthesis via de novo pathway; N(2)-formyl-N(1)-(5-phospho-D-ribosyl)glycinamide from N(1)-(5-phospho-D-ribosyl)glycinamide (formate route): step 1/1. Involved in the de novo purine biosynthesis. Catalyzes the transfer of formate to 5-phospho-ribosyl-glycinamide (GAR), producing 5-phospho-ribosyl-N-formylglycinamide (FGAR). Formate is provided by PurU via hydrolysis of 10-formyl-tetrahydrofolate. The polypeptide is Formate-dependent phosphoribosylglycinamide formyltransferase (Trichormus variabilis (strain ATCC 29413 / PCC 7937) (Anabaena variabilis)).